The sequence spans 1072 residues: DNA-directed RNA polymerase subunit beta (1072 aa).

The protein belongs to the RNA polymerase beta chain family. As to quaternary structure, in plastids the minimal PEP RNA polymerase catalytic core is composed of four subunits: alpha, beta, beta', and beta''. When a (nuclear-encoded) sigma factor is associated with the core the holoenzyme is formed, which can initiate transcription.

The protein localises to the plastid. It localises to the chloroplast. The enzyme catalyses RNA(n) + a ribonucleoside 5'-triphosphate = RNA(n+1) + diphosphate. Its function is as follows. DNA-dependent RNA polymerase catalyzes the transcription of DNA into RNA using the four ribonucleoside triphosphates as substrates. This is DNA-directed RNA polymerase subunit beta from Draba nemorosa (Woodland whitlowgrass).